Consider the following 292-residue polypeptide: F-box only protein 16 (292 aa).

Residues 86–132 (LDFTTKLPRVLSLYIFSFLDPRSLCRCAQVCWHWKNLAELDQLWMLK) form the F-box domain. 2 disordered regions span residues 188-224 (SPEE…SSDK) and 238-292 (RDPM…PLCP). The span at 194 to 204 (SPLSAFRSSSS) shows a compositional bias: low complexity. Basic and acidic residues predominate over residues 260 to 273 (RQSHDKKNKLQDRT).

Part of a SCF (SKP1-cullin-F-box) protein ligase complex. Expressed in heart, spleen and colon.

Functionally, probably recognizes and binds to some phosphorylated proteins and promotes their ubiquitination and degradation. The polypeptide is F-box only protein 16 (FBXO16) (Homo sapiens (Human)).